Here is a 154-residue protein sequence, read N- to C-terminus: Ribosomal RNA-processing protein 14-N (154 aa).

Positions 36–154 are disordered; it reads WKQKKSTLEE…KHKASPRAGF (119 aa). Serine 80 carries the post-translational modification Phosphoserine. Threonine 83 carries the phosphothreonine modification. Over residues 105 to 133 the composition is skewed to basic and acidic residues; that stretch reads QDLREKRKAGDLNQKRQNKRPVENEKDSQ. Residues 140–154 show a composition bias toward basic residues; that stretch reads KVQKKKHKASPRAGF.

This sequence belongs to the SURF6 family.

The protein resides in the nucleus. Its subcellular location is the nucleolus. In terms of biological role, involved in ribosome biogenesis and cell polarity. Required for the synthesis of both 40S and 60S ribosomal subunits and may also play some direct role in correct positioning of the mitotic spindle during mitosis. This is Ribosomal RNA-processing protein 14-N (rrp14n) from Schizosaccharomyces pombe (strain 972 / ATCC 24843) (Fission yeast).